The following is an 869-amino-acid chain: Phenylalanine--tRNA ligase beta subunit (869 aa).

A tRNA-binding domain is found at 41 to 162; it reads SQVTGPIVVG…QYGFSEAEYE (122 aa). The 77-residue stretch at 443 to 519 folds into the B5 domain; that stretch reads PRAKAIHFKA…RLVGYDQIPI (77 aa). Residues Asp-497, Asp-503, Glu-506, and Glu-507 each coordinate Mg(2+). In terms of domain architecture, FDX-ACB spans 776 to 868; the sequence is STFPPVKQDL…EAAEIGAQLR (93 aa).

It belongs to the phenylalanyl-tRNA synthetase beta subunit family. Type 1 subfamily. In terms of assembly, tetramer of two alpha and two beta subunits. Mg(2+) is required as a cofactor.

It is found in the cytoplasm. It carries out the reaction tRNA(Phe) + L-phenylalanine + ATP = L-phenylalanyl-tRNA(Phe) + AMP + diphosphate + H(+). This Bifidobacterium longum (strain NCC 2705) protein is Phenylalanine--tRNA ligase beta subunit.